A 298-amino-acid chain; its full sequence is N-acetylmuramic acid 6-phosphate etherase (298 aa).

The 164-residue stretch at 55-218 (IHAQVSGGGR…STGLMIKSGK (164 aa)) folds into the SIS domain. Residue Glu83 is the Proton donor of the active site. Glu114 is a catalytic residue.

This sequence belongs to the GCKR-like family. MurNAc-6-P etherase subfamily. In terms of assembly, homodimer.

It carries out the reaction N-acetyl-D-muramate 6-phosphate + H2O = N-acetyl-D-glucosamine 6-phosphate + (R)-lactate. It participates in amino-sugar metabolism; 1,6-anhydro-N-acetylmuramate degradation. Its pathway is amino-sugar metabolism; N-acetylmuramate degradation. It functions in the pathway cell wall biogenesis; peptidoglycan recycling. Its function is as follows. Specifically catalyzes the cleavage of the D-lactyl ether substituent of MurNAc 6-phosphate, producing GlcNAc 6-phosphate and D-lactate. Together with AnmK, is also required for the utilization of anhydro-N-acetylmuramic acid (anhMurNAc) either imported from the medium or derived from its own cell wall murein, and thus plays a role in cell wall recycling. The chain is N-acetylmuramic acid 6-phosphate etherase from Escherichia coli (strain SMS-3-5 / SECEC).